Reading from the N-terminus, the 473-residue chain is MTTIYNTLTRQKEPFSPIDPENVRMYVCGMTVYDYCHLGHARVMVVFDMIARWLRECGYPLTYVRNITDIDDKIIARAAENGETIGKLTARFIQAMHEDADALGVLRPDIEPKATENIPQMIAMIETLIQNGKAYPAANGDVYYAVREFAAYGQLSGKSLDDLRAGERVEVDGFKRDPLDFVLWKAAKAGEPAWESPWGNGRPGWHIECSAMSENLFGDTFDIHGGGADLQFPHHENEIAQSVGATGHTCGHHHAQTHHGQSIASHVKYWLHNGFIRVDGEKMSKSLGNFFTIREVLKQYDPEVVRFFILRAHYRSPLNYSDAHLDDAKGALTRLYTTLKNTPPADPMPSEAGDDYTRRFYVAMNDDFDTVKAVAVLFELAGEVNKTNDAQLAGRLKALGGIIGLLQRDPTEFLQGGAASDGLSNEEIEDLIARRKQARADKNWAESDRIRDLLNEHKIILEDNAGGTTWRRG.

Residue Cys-28 coordinates Zn(2+). The short motif at 30–40 (MTVYDYCHLGH) is the 'HIGH' region element. 3 residues coordinate Zn(2+): Cys-209, His-234, and Glu-238. The 'KMSKS' region motif lies at 282–286 (KMSKS). An ATP-binding site is contributed by Lys-285.

It belongs to the class-I aminoacyl-tRNA synthetase family. Monomer. Zn(2+) serves as cofactor.

The protein localises to the cytoplasm. The enzyme catalyses tRNA(Cys) + L-cysteine + ATP = L-cysteinyl-tRNA(Cys) + AMP + diphosphate. This chain is Cysteine--tRNA ligase, found in Neisseria meningitidis serogroup B (strain ATCC BAA-335 / MC58).